Reading from the N-terminus, the 211-residue chain is Ribosomal RNA small subunit methyltransferase G (211 aa).

S-adenosyl-L-methionine is bound by residues Gly-74, Leu-79, 125 to 126 (AE), and Arg-140.

It belongs to the methyltransferase superfamily. RNA methyltransferase RsmG family.

The protein resides in the cytoplasm. Specifically methylates the N7 position of guanine in position 518 of 16S rRNA. This is Ribosomal RNA small subunit methyltransferase G from Clavibacter sepedonicus (Clavibacter michiganensis subsp. sepedonicus).